The following is a 309-amino-acid chain: Protein-L-isoaspartate O-methyltransferase (309 aa).

The segment at 1-46 is disordered; sequence MSGERAKRFPLALEDLKRAPRKSDGRAGERHAAIAAPKAADKPAAV. Over residues 14-32 the composition is skewed to basic and acidic residues; the sequence is EDLKRAPRKSDGRAGERHA. Low complexity predominate over residues 33–46; the sequence is AIAAPKAADKPAAV. Ser156 is a catalytic residue.

Belongs to the methyltransferase superfamily. L-isoaspartyl/D-aspartyl protein methyltransferase family.

It localises to the cytoplasm. The enzyme catalyses [protein]-L-isoaspartate + S-adenosyl-L-methionine = [protein]-L-isoaspartate alpha-methyl ester + S-adenosyl-L-homocysteine. In terms of biological role, catalyzes the methyl esterification of L-isoaspartyl residues in peptides and proteins that result from spontaneous decomposition of normal L-aspartyl and L-asparaginyl residues. It plays a role in the repair and/or degradation of damaged proteins. This is Protein-L-isoaspartate O-methyltransferase from Burkholderia vietnamiensis (strain G4 / LMG 22486) (Burkholderia cepacia (strain R1808)).